Consider the following 527-residue polypeptide: T-complex protein 1 subunit beta (527 aa).

Position 2 is an N-acetylserine (S2).

This sequence belongs to the TCP-1 chaperonin family. Heterooligomeric complex of about 850 to 900 kDa that forms two stacked rings, 12 to 16 nm in diameter. Interacts with PLP2; this interaction leads to inhibition of CCT complex mediated actin folding.

It is found in the cytoplasm. Molecular chaperone; assists the folding of proteins upon ATP hydrolysis. Known to play a role, in vitro, in the folding of actin and tubulin. In yeast may play a role in mitotic spindle formation. This is T-complex protein 1 subunit beta (CCT2) from Saccharomyces cerevisiae (strain ATCC 204508 / S288c) (Baker's yeast).